Here is a 130-residue protein sequence, read N- to C-terminus: Small ribosomal subunit protein uS8 (130 aa).

The protein belongs to the universal ribosomal protein uS8 family. As to quaternary structure, part of the 30S ribosomal subunit.

One of the primary rRNA binding proteins, it binds directly to 16S rRNA central domain where it helps coordinate assembly of the platform of the 30S subunit. The sequence is that of Small ribosomal subunit protein uS8 from Natronomonas pharaonis (strain ATCC 35678 / DSM 2160 / CIP 103997 / JCM 8858 / NBRC 14720 / NCIMB 2260 / Gabara) (Halobacterium pharaonis).